The following is a 167-amino-acid chain: Phosphopantetheine adenylyltransferase (167 aa).

Serine 9 lines the substrate pocket. Residues 9-10 (SF) and histidine 17 contribute to the ATP site. Residues lysine 41, valine 78, and arginine 92 each coordinate substrate. Residues 93-95 (GLR), glutamate 103, and 128-134 (SRPITAT) each bind ATP.

The protein belongs to the bacterial CoaD family. As to quaternary structure, homohexamer. The cofactor is Mg(2+).

The protein resides in the cytoplasm. The catalysed reaction is (R)-4'-phosphopantetheine + ATP + H(+) = 3'-dephospho-CoA + diphosphate. The protein operates within cofactor biosynthesis; coenzyme A biosynthesis; CoA from (R)-pantothenate: step 4/5. Its function is as follows. Reversibly transfers an adenylyl group from ATP to 4'-phosphopantetheine, yielding dephospho-CoA (dPCoA) and pyrophosphate. This chain is Phosphopantetheine adenylyltransferase, found in Rhizobium rhizogenes (strain K84 / ATCC BAA-868) (Agrobacterium radiobacter).